A 364-amino-acid chain; its full sequence is Leucine dehydrogenase (364 aa).

The active site involves Lys80. Residue 180-186 participates in NAD(+) binding; it reads GVGNVAY.

Belongs to the Glu/Leu/Phe/Val dehydrogenases family.

The enzyme catalyses L-leucine + NAD(+) + H2O = 4-methyl-2-oxopentanoate + NH4(+) + NADH + H(+). It functions in the pathway amino-acid degradation; L-leucine degradation; 4-methyl-2-oxopentanoate from L-leucine (dehydrogenase route): step 1/1. Catalyzes the reversible deamination of L-leucine to 4-methyl-2-oxopentanoate. The protein is Leucine dehydrogenase (yqiT) of Bacillus subtilis (strain 168).